A 253-amino-acid chain; its full sequence is Beta-crystallin B1 (253 aa).

Residues 1–18 (MSQPAAKASATAAVNPGP) show a composition bias toward low complexity. Positions 1-53 (MSQPAAKASATAAVNPGPDGKGKAGPPPGPAPGSGPAPAPAPAPAQPAPAAKA) are disordered. Ser2 is subject to N-acetylserine. The segment at 2–59 (SQPAAKASATAAVNPGPDGKGKAGPPPGPAPGSGPAPAPAPAPAQPAPAAKAELPPGS) is N-terminal arm. Residues 25–47 (GPPPGPAPGSGPAPAPAPAPAQP) show a composition bias toward pro residues. Beta/gamma crystallin 'Greek key' domains lie at 60 to 99 (YKLV…IVTS) and 100 to 144 (GPWV…RPIK). Positions 145-149 (MDAQE) are connecting peptide. 2 consecutive Beta/gamma crystallin 'Greek key' domains span residues 150–191 (HKLC…RVSS) and 192–234 (GTWV…RRLR). Residues 236–253 (RQWHREGCFPVLAAEPPK) are C-terminal arm.

The protein belongs to the beta/gamma-crystallin family. Homo/heterodimer, or complexes of higher-order. The structure of beta-crystallin oligomers seems to be stabilized through interactions between the N-terminal arms. Post-translationally, specific cleavages in the N-terminal arm occur during lens maturation and give rise to truncated forms, leading to impaired oligomerization and protein insolubilization.

In terms of biological role, crystallins are the dominant structural components of the vertebrate eye lens. The sequence is that of Beta-crystallin B1 (CRYBB1) from Bos taurus (Bovine).